The sequence spans 565 residues: uncharacterized protein (565 aa).

The next 5 helical transmembrane spans lie at 4-26 (FVQFLGSNPYILLFLTIGLAVWV), 33-55 (GYGLGAVAAAIVVGCLVATVGAA), 68-90 (SLLYYLFMYGVGLRVGPSFVNAL), 97-119 (YAILAIIAPILGLAIVVLGTQFF), and 162-184 (ISAMIALSYGITYIWGTVGIILL). RCK C-terminal domains follow at residues 210 to 295 (PNVD…LGPE) and 296 to 379 (VPDA…IFGV). Helical transmembrane passes span 389–411 (LLTLSFGMILGFLIGLIEVPAFG), 415–432 (GLGNAGGLLLSGIIVSSI), 453–472 (LGLIGFVAIVGINAGADLLT), 482–504 (IFIVGFLASTIPPIIVWAIGFHI), and 539–561 (WLGFPVGYAVSGVLLTVFGYFAM).

It belongs to the AAE transporter (TC 2.A.81) family.

Its subcellular location is the cell membrane. This is an uncharacterized protein from Bordetella parapertussis (strain 12822 / ATCC BAA-587 / NCTC 13253).